The primary structure comprises 232 residues: Large ribosomal subunit protein uL1 (232 aa).

The protein belongs to the universal ribosomal protein uL1 family. Part of the 50S ribosomal subunit.

Its function is as follows. Binds directly to 23S rRNA. The L1 stalk is quite mobile in the ribosome, and is involved in E site tRNA release. Functionally, protein L1 is also a translational repressor protein, it controls the translation of the L11 operon by binding to its mRNA. The polypeptide is Large ribosomal subunit protein uL1 (Phocaeicola vulgatus (strain ATCC 8482 / DSM 1447 / JCM 5826 / CCUG 4940 / NBRC 14291 / NCTC 11154) (Bacteroides vulgatus)).